We begin with the raw amino-acid sequence, 177 residues long: Austinoid biosynthesis clusters protein F (177 aa).

It belongs to the trt14 isomerase family. As to quaternary structure, homodimer.

Its pathway is secondary metabolite biosynthesis; terpenoid biosynthesis. In terms of biological role, part of the gene cluster B that mediates the biosynthesis of austinol and dehydroaustinol, two fungal meroterpenoids. The first step of the pathway is the synthesis of 3,5-dimethylorsellinic acid by the polyketide synthase ausA. 3,5-dimethylorsellinic acid is then prenylated by the polyprenyl transferase ausN. Further epoxidation by the FAD-dependent monooxygenase ausM and cyclization by the probable terpene cyclase ausL lead to the formation of protoaustinoid A. Protoaustinoid A is then oxidized to spiro-lactone preaustinoid A3 by the combined action of the FAD-binding monooxygenases ausB and ausC, and the dioxygenase ausE. Acid-catalyzed keto-rearrangement and ring contraction of the tetraketide portion of preaustinoid A3 by ausJ lead to the formation of preaustinoid A4. The aldo-keto reductase ausK, with the help of ausH, is involved in the next step by transforming preaustinoid A4 into isoaustinone which is in turn hydroxylated by the P450 monooxygenase ausI to form austinolide. Finally, the cytochrome P450 monooxygenase ausG modifies austinolide to austinol. Austinol can be further modified to dehydroaustinol which forms a diffusible complex with diorcinol that initiates conidiation. Due to genetic rearrangements of the clusters and the subsequent loss of some enzymes, the end products of the Emericella nidulans austinoid biosynthesis clusters are austinol and dehydroaustinol, even if additional enzymes, such as the O-acetyltransferase ausQ and the cytochrome P450 monooxygenase ausR are still functional. The chain is Austinoid biosynthesis clusters protein F from Emericella nidulans (strain FGSC A4 / ATCC 38163 / CBS 112.46 / NRRL 194 / M139) (Aspergillus nidulans).